The chain runs to 628 residues: tRNA uridine 5-carboxymethylaminomethyl modification enzyme MnmG (628 aa).

14 to 19 (GAGHAG) provides a ligand contact to FAD. 273-287 (GPRYCPSIEDKVVRF) is a binding site for NAD(+).

The protein belongs to the MnmG family. Homodimer. Heterotetramer of two MnmE and two MnmG subunits. FAD serves as cofactor.

It is found in the cytoplasm. Its function is as follows. NAD-binding protein involved in the addition of a carboxymethylaminomethyl (cmnm) group at the wobble position (U34) of certain tRNAs, forming tRNA-cmnm(5)s(2)U34. This is tRNA uridine 5-carboxymethylaminomethyl modification enzyme MnmG from Bacillus velezensis (strain DSM 23117 / BGSC 10A6 / LMG 26770 / FZB42) (Bacillus amyloliquefaciens subsp. plantarum).